Reading from the N-terminus, the 506-residue chain is Thyroid hormone receptor alpha (506 aa).

The interval 1 to 32 is disordered; that stretch reads MEQKPSKVECGSDPEENSARSPDGKRKRKNGQ. The segment at 1–52 is modulating; it reads MEQKPSKVECGSDPEENSARSPDGKRKRKNGQCSLKTSMSGYIPSYLDKDEQ. The Zn(2+) site is built by Cys53, Cys56, Cys70, Cys73, Cys91, Cys97, Cys107, and Cys110. NR C4-type zinc fingers lie at residues 53–73 and 91–115; these read CVVC…CEGC and CKYD…FKKC. Positions 53–127 form a DNA-binding region, nuclear receptor; that stretch reads CVVCGDKATG…VGMAMDLVLD (75 aa). The NR LBD domain maps to 163–407; the sequence is EEWDLIHVAT…EGQQLLGMHV (245 aa). 2 residues coordinate 3,3',5-triiodo-L-thyronine: Arg228 and Ser277. The segment at 460-506 is disordered; sequence GEDDSSEAGSLTSSDEDPEVCEDAAQATQPLPEAPPRADGEGGGGGS.

The protein belongs to the nuclear hormone receptor family. NR1 subfamily. As to quaternary structure, binds DNA as a dimer; homodimer and heterodimer with RXRB. Interacts with NCOA3 and NCOA6 coactivators, leading to a strong increase of transcription of target genes. Probably interacts with SFPQ. Interacts with C1D. Interacts with AKAP13. Interacts with TP53INP2. Interacts with PER2. Interacts with PER2. Isoform alpha-2 and isoform alpha-1 interact with TACC1, but the interaction with alpha-1 is weaker. The interaction with isoform alpha-1, but not alpha-2, is decreased in the presence of thyroid hormone T3.

It is found in the nucleus. The protein localises to the cytoplasm. Functionally, nuclear hormone receptor that can act as a repressor or activator of transcription. High affinity receptor for thyroid hormones, including triiodothyronine and thyroxine. This is Thyroid hormone receptor alpha (THRA) from Sus scrofa (Pig).